The chain runs to 174 residues: MILEVRKFQVKNKAVYIGTLSEDKIFGIIFSIDEPEVIRHRIPTLINFLEKRLNKKLEIKEGNSGFSDVVFKTLIGKISNEEAAEFIEVSYLTKFERKLYIYLVENVKRGEVITYGELAKILNTSSRAVGAAVKRNPYPIIVPCHRVIGRKNPYLYTPKPEYKKFLLEVEGWTS.

Cys144 functions as the Nucleophile; methyl group acceptor in the catalytic mechanism.

It belongs to the MGMT family.

Its subcellular location is the cytoplasm. The catalysed reaction is a 6-O-methyl-2'-deoxyguanosine in DNA + L-cysteinyl-[protein] = S-methyl-L-cysteinyl-[protein] + a 2'-deoxyguanosine in DNA. The enzyme catalyses a 4-O-methyl-thymidine in DNA + L-cysteinyl-[protein] = a thymidine in DNA + S-methyl-L-cysteinyl-[protein]. In terms of biological role, involved in the cellular defense against the biological effects of O6-methylguanine (O6-MeG) and O4-methylthymine (O4-MeT) in DNA. Repairs the methylated nucleobase in DNA by stoichiometrically transferring the methyl group to a cysteine residue in the enzyme. This is a suicide reaction: the enzyme is irreversibly inactivated. This chain is Methylated-DNA--protein-cysteine methyltransferase, found in Pyrococcus furiosus (strain ATCC 43587 / DSM 3638 / JCM 8422 / Vc1).